The primary structure comprises 369 residues: tRNA 2-selenouridine synthase (369 aa).

One can recognise a Rhodanese domain in the interval 15–138; it reads FLNQHPMMDV…MRQYLIGVIE (124 aa). Residue Cys-98 is the S-selanylcysteine intermediate of the active site.

Belongs to the SelU family. In terms of assembly, monomer.

The catalysed reaction is 5-methylaminomethyl-2-thiouridine(34) in tRNA + selenophosphate + (2E)-geranyl diphosphate + H2O + H(+) = 5-methylaminomethyl-2-selenouridine(34) in tRNA + (2E)-thiogeraniol + phosphate + diphosphate. It catalyses the reaction 5-methylaminomethyl-2-thiouridine(34) in tRNA + (2E)-geranyl diphosphate = 5-methylaminomethyl-S-(2E)-geranyl-thiouridine(34) in tRNA + diphosphate. It carries out the reaction 5-methylaminomethyl-S-(2E)-geranyl-thiouridine(34) in tRNA + selenophosphate + H(+) = 5-methylaminomethyl-2-(Se-phospho)selenouridine(34) in tRNA + (2E)-thiogeraniol. The enzyme catalyses 5-methylaminomethyl-2-(Se-phospho)selenouridine(34) in tRNA + H2O = 5-methylaminomethyl-2-selenouridine(34) in tRNA + phosphate. Involved in the post-transcriptional modification of the uridine at the wobble position (U34) of tRNA(Lys), tRNA(Glu) and tRNA(Gln). Catalyzes the conversion of 2-thiouridine (S2U-RNA) to 2-selenouridine (Se2U-RNA). Acts in a two-step process involving geranylation of 2-thiouridine (S2U) to S-geranyl-2-thiouridine (geS2U) and subsequent selenation of the latter derivative to 2-selenouridine (Se2U) in the tRNA chain. In Shewanella sp. (strain W3-18-1), this protein is tRNA 2-selenouridine synthase.